We begin with the raw amino-acid sequence, 107 residues long: UPF0145 protein MAB_3451c (107 aa).

This sequence belongs to the UPF0145 family.

In Mycobacteroides abscessus (strain ATCC 19977 / DSM 44196 / CCUG 20993 / CIP 104536 / JCM 13569 / NCTC 13031 / TMC 1543 / L948) (Mycobacterium abscessus), this protein is UPF0145 protein MAB_3451c.